Consider the following 156-residue polypeptide: Transmembrane protein 50 homolog (156 aa).

The next 4 membrane-spanning stretches (helical) occupy residues 5–25 (IMKY…FLWI), 45–65 (IQWI…MANI), 87–107 (VWLF…LWIM), and 124–144 (PGIA…LLVF).

This sequence belongs to the UPF0220 family.

It is found in the membrane. The polypeptide is Transmembrane protein 50 homolog (tmem50) (Dictyostelium discoideum (Social amoeba)).